A 248-amino-acid chain; its full sequence is Probable phosphatase VS_II0429 (248 aa).

His-8, His-10, His-16, His-41, Glu-74, His-102, His-132, Asp-194, and His-196 together coordinate Zn(2+).

Belongs to the PHP family. Zn(2+) serves as cofactor.

The chain is Probable phosphatase VS_II0429 from Vibrio atlanticus (strain LGP32) (Vibrio splendidus (strain Mel32)).